Here is a 910-residue protein sequence, read N- to C-terminus: Dynein axonemal assembly factor 1 homolog (910 aa).

LRR repeat units lie at residues 43 to 64 (GLKCLWLECNAISNISGLDHQS), 65 to 86 (QLRCLYLHNNLIKKIENLQHCK), 87 to 108 (QLDTLNLSHNHIAKIENCGSDI), 111 to 132 (VLNTLNISHNYLKSIESLAELR), and 136 to 157 (FVSVLDISHNRIEDIAIVKVLA). Residues 171–209 (PVVNDIPSYRKTLILECKSLTYLDSRPVFDKDRACAEAW) enclose the LRRCT domain. A compositionally biased stretch (basic and acidic residues) spans 217–230 (ERKEHQRWKKEEQR). Disordered regions lie at residues 217–275 (ERKE…GDFE), 297–332 (TKGDTQQAQKLAEERKASTNSVDYITGSDSNSDPTL), 344–399 (SRAC…GSIL), 620–642 (EQVPDEVEANDKASDATIDPVDQ), 662–682 (QVEVGPSDPKDATTSKPIPEE), and 855–910 (EELE…QGDH). The span at 314 to 331 (STNSVDYITGSDSNSDPT) shows a compositional bias: polar residues. Residues 380-389 (SLSDSSSSSS) show a composition bias toward low complexity. Positions 620–633 (EQVPDEVEANDKAS) are enriched in basic and acidic residues. Acidic residues predominate over residues 855–865 (EELEELNEEED). Positions 866–878 (PALKEAGDFKHDE) are enriched in basic and acidic residues.

Belongs to the DNAAF1 family.

Its subcellular location is the cell projection. The protein resides in the cilium. Cilium-specific protein required for cilia structures. This Anopheles gambiae (African malaria mosquito) protein is Dynein axonemal assembly factor 1 homolog.